The sequence spans 306 residues: Mitochondrial substrate carrier family protein ucpA (306 aa).

The Mitochondrial intermembrane portion of the chain corresponds to 1–15 (MSVNLNNNKNNKNKV). Solcar repeat units lie at residues 13–103 (NKVA…ISNA), 112–204 (YFFL…CKNL), and 211–301 (DGIY…FKKL). Residues 16–36 (AIGFISGSLASICATTVTNPI) traverse the membrane as a helical segment. The Mitochondrial matrix portion of the chain corresponds to 37–83 (ELVKTRLQLQGELQLSQRIYNGVWDAFKQIYKTEGIRGLQSGLIPAY). Residues 84 to 103 (FSQATMQGIRLGSFDLISNA) form a helical membrane-spanning segment. The Mitochondrial intermembrane segment spans residues 104–117 (LGAKPNQDYFFLKN). A helical membrane pass occupies residues 118-138 (LLAGATAGAIGAAAGSPFDLV). Topologically, residues 139–174 (KVRMQAANMYKNDPQFVGYSSSFAAFKQIIQKEGFK) are mitochondrial matrix. Residues 175 to 195 (GLTRGMLTSAQRTAVGSAIQL) traverse the membrane as a helical segment. Residues 196-211 (STYGSCKNLVLNFVDD) lie on the Mitochondrial intermembrane side of the membrane. Residues 212-232 (GIYAYIISSMVAGFIVTFGMN) form a helical membrane-spanning segment. At 233 to 276 (PFDVARTRLYFQGKGNSHGEIYKGLMDCVYKTVKKEGFGAVYKG) the chain is on the mitochondrial matrix side. The helical transmembrane segment at 277 to 295 (FWAHYLRLGPHTILTLVFW) threads the bilayer. Residues 296–306 (EQFKKLFSGEL) lie on the Mitochondrial intermembrane side of the membrane.

Belongs to the mitochondrial carrier (TC 2.A.29) family.

The protein localises to the mitochondrion inner membrane. Mitochondrial solute carriers shuttle metabolites, nucleotides, and cofactors through the mitochondrial inner membrane. Transports oxaloacetate and sulfate. This chain is Mitochondrial substrate carrier family protein ucpA (ucpA), found in Dictyostelium discoideum (Social amoeba).